Consider the following 369-residue polypeptide: Histidinol-phosphate aminotransferase 2 (369 aa).

Position 231 is an N6-(pyridoxal phosphate)lysine (lysine 231).

The protein belongs to the class-II pyridoxal-phosphate-dependent aminotransferase family. Histidinol-phosphate aminotransferase subfamily. As to quaternary structure, homodimer. The cofactor is pyridoxal 5'-phosphate.

The enzyme catalyses L-histidinol phosphate + 2-oxoglutarate = 3-(imidazol-4-yl)-2-oxopropyl phosphate + L-glutamate. Its pathway is amino-acid biosynthesis; L-histidine biosynthesis; L-histidine from 5-phospho-alpha-D-ribose 1-diphosphate: step 7/9. The sequence is that of Histidinol-phosphate aminotransferase 2 from Legionella pneumophila (strain Paris).